The chain runs to 149 residues: UPF0306 protein PM1958 (149 aa).

It belongs to the UPF0306 family.

The polypeptide is UPF0306 protein PM1958 (Pasteurella multocida (strain Pm70)).